The sequence spans 2531 residues: Highly reducing polyketide synthase gloL (2531 aa).

Positions 15-435 (YEPLAIVGMG…GANAHVILDS (421 aa)) constitute a Ketosynthase family 3 (KS3) domain. Residues cysteine 187, histidine 322, and histidine 358 each act as for beta-ketoacyl synthase activity in the active site. Residues 449-525 (TNGLSVNGHS…GHSVNGHSKP (77 aa)) are disordered. A compositionally biased stretch (low complexity) spans 453–503 (SVNGHSINGNSVNGHSVNGHSTNGHSINGNSVNGHSVNGNSVNGHSTNGHS). The span at 505–521 (NGHSANGNSINGHSVNG) shows a compositional bias: polar residues. Residues 602–909 (MVFTGQGAQW…VTALERGKDC (308 aa)) are malonyl-CoA:ACP transacylase (MAT) domain. The segment at 971 to 1099 (HEILGSRTVE…GQIRSGTDNP (129 aa)) is N-terminal hotdog fold. A dehydratase (DH) domain region spans residues 971–1251 (HEILGSRTVE…GGQFSPIEED (281 aa)). In terms of domain architecture, PKS/mFAS DH spans 971–1254 (HEILGSRTVE…FSPIEEDSSD (284 aa)). Residue histidine 1003 is the Proton acceptor; for dehydratase activity of the active site. The tract at residues 1109 to 1254 (DHPRSVPSPY…FSPIEEDSSD (146 aa)) is C-terminal hotdog fold. Aspartate 1169 serves as the catalytic Proton donor; for dehydratase activity. The tract at residues 1419-1597 (DFFTAAGHSK…FSGCDATVYD (179 aa)) is methyltransferase (CMet) domain. Residues 1806–2114 (GLLQTLRWVP…KGSHIGKIVV (309 aa)) form an enoyl reductase (ER) (ER) domain region. The tract at residues 2139–2312 (GYLLVGGLGG…ASVVDIGVMG (174 aa)) is ketoreductase (KR) domain. One can recognise a Carrier domain in the interval 2413–2505 (MSSVETDSSI…ALGLLTIEGL (93 aa)). O-(pantetheine 4'-phosphoryl)serine is present on serine 2464.

It functions in the pathway mycotoxin biosynthesis. Functionally, highly reducing polyketide synthase; part of the gene cluster that mediates the biosynthesis of pneumocandins, lipohexapeptides of the echinocandin family that prevent fungal cell wall formation by non-competitive inhibition of beta-1,3-glucan synthase. The 10,12-dimethylmyristoyl side chain is synthesized by the reducing polyketide synthase gloL/GLPKS4. The thioesterase gloN/GLHYD exclusively interacts with gloL/GLPKS4 to maintain turnover of the polyketide side chain. The 10R,12S-dimethylmyristic acid is then transferred to the first thiolation domain of the nonribosomal peptide synthetase gloA/GLNRPS4 by the acyl-AMP ligase gloD/GLligase, followed by its acylation to L-ornithine to trigger elongation of the cyclic hexapeptide. L-ornithine, 4R-hydroxyl-L-proline (generated from L-proline by the dioxygenase gloF/GLOXY2), 3S-hydroxyl-L-homotyrosine (generated by gloG/GLHtyB, gloH/GLHtyA, gloI/GLHtyC, gloJ/GLHtyD and hydroxylated at C-3 by the dioxygenase gloM/GLOXY1), 3R-hydroxyl-L-glutamine (generated from L-glutamine probably by the dioxygenase gloE/GLOXY3) and 3S-hydroxyl-L-proline (generated from L-proline by the dioxygenase gloF/GLOXY2 to yield pneumocandin B0), or 3S-hydroxyl-4S-methyl-L-proline (generated from L-leucine by the dioxygenase gloC/GLOXY4 to yield pneumocandin A0) are sequentially added to the growing chain. The last C domain of gloA/GLNRPS4 is proposed to be responsible for cyclization by condensation to form the peptide bond between L-ornithine and 3S-hydroxyl-4S-methyl-L-proline (for pneumocandin A0) or 3S-hydroxyl-L-proline (for pneumocandin B0). Finally, the subsequent C-4 hydroxylation of 3S-hydroxyl-L-homotyrosine and L-ornithine dihydroxylation at C-4 and C-5 are performed by the cytochrome P450 monooxygenases gloP/GLP450-1 and gloO/GLP450-2, respectively. The polypeptide is Highly reducing polyketide synthase gloL (Glarea lozoyensis (strain ATCC 20868 / MF5171)).